The following is a 116-amino-acid chain: Large ribosomal subunit protein uL18 (116 aa).

Belongs to the universal ribosomal protein uL18 family. Part of the 50S ribosomal subunit; part of the 5S rRNA/L5/L18/L25 subcomplex. Contacts the 5S and 23S rRNAs.

This is one of the proteins that bind and probably mediate the attachment of the 5S RNA into the large ribosomal subunit, where it forms part of the central protuberance. This Shewanella putrefaciens (strain CN-32 / ATCC BAA-453) protein is Large ribosomal subunit protein uL18.